Reading from the N-terminus, the 524-residue chain is 2-isopropylmalate synthase (524 aa).

The Pyruvate carboxyltransferase domain occupies 12 to 274; the sequence is VIIFDTTLRD…WNNIETTMLT (263 aa). 4 residues coordinate Mn(2+): Asp21, His209, His211, and Asn245. Positions 398-524 are regulatory domain; it reads KLNSLTVIAG…EAVPAVAAAG (127 aa).

This sequence belongs to the alpha-IPM synthase/homocitrate synthase family. LeuA type 1 subfamily. Homodimer. Mn(2+) is required as a cofactor.

It is found in the cytoplasm. The enzyme catalyses 3-methyl-2-oxobutanoate + acetyl-CoA + H2O = (2S)-2-isopropylmalate + CoA + H(+). The protein operates within amino-acid biosynthesis; L-leucine biosynthesis; L-leucine from 3-methyl-2-oxobutanoate: step 1/4. In terms of biological role, catalyzes the condensation of the acetyl group of acetyl-CoA with 3-methyl-2-oxobutanoate (2-ketoisovalerate) to form 3-carboxy-3-hydroxy-4-methylpentanoate (2-isopropylmalate). The protein is 2-isopropylmalate synthase of Rhodopseudomonas palustris (strain HaA2).